The primary structure comprises 216 residues: Soluble inorganic pyrophosphatase 5 (216 aa).

The interval 1–20 (MNGEEVKTSQPQKKLQNPTP) is disordered. Over residues 8–20 (TSQPQKKLQNPTP) the composition is skewed to polar residues. Positions 66 and 80 each coordinate substrate. Tyrosine 88 acts as the Proton donor in catalysis. A substrate-binding site is contributed by tyrosine 92. Aspartate 102, aspartate 107, and aspartate 139 together coordinate Mg(2+). Tyrosine 176 contributes to the substrate binding site.

Belongs to the PPase family. Requires Mg(2+) as cofactor.

It localises to the cytoplasm. The enzyme catalyses diphosphate + H2O = 2 phosphate + H(+). The chain is Soluble inorganic pyrophosphatase 5 from Arabidopsis thaliana (Mouse-ear cress).